Reading from the N-terminus, the 294-residue chain is Nucleotide-binding protein A2cp1_0165 (294 aa).

17 to 24 (GVSGSGKS) provides a ligand contact to ATP. 68–71 (DARE) contacts GTP.

This sequence belongs to the RapZ-like family.

Displays ATPase and GTPase activities. In Anaeromyxobacter dehalogenans (strain 2CP-1 / ATCC BAA-258), this protein is Nucleotide-binding protein A2cp1_0165.